Here is a 527-residue protein sequence, read N- to C-terminus: Peptide chain release factor 3 (527 aa).

Positions 9 to 277 constitute a tr-type G domain; that stretch reads AKRRTFAIIS…AVVNWAPMPL (269 aa). Residues 18–25, 86–90, and 140–143 each bind GTP; these read SHPDAGKT, DTPGH, and NKLD.

This sequence belongs to the TRAFAC class translation factor GTPase superfamily. Classic translation factor GTPase family. PrfC subfamily.

Its subcellular location is the cytoplasm. Functionally, increases the formation of ribosomal termination complexes and stimulates activities of RF-1 and RF-2. It binds guanine nucleotides and has strong preference for UGA stop codons. It may interact directly with the ribosome. The stimulation of RF-1 and RF-2 is significantly reduced by GTP and GDP, but not by GMP. This Pseudomonas syringae pv. tomato (strain ATCC BAA-871 / DC3000) protein is Peptide chain release factor 3.